Reading from the N-terminus, the 122-residue chain is Fluoride-specific ion channel FluC 2 (122 aa).

Transmembrane regions (helical) follow at residues 4–24 (VAVWVGVALIGGVGSVLRFVV), 38–58 (LGTLVVNLSGAALLGFLGGLA), 63–83 (AALLAGTAFVGAYTTFSTWML), and 96–116 (AALANIVVSVVLGGAAAFIGQ). Residues G73 and T76 each contribute to the Na(+) site.

The protein belongs to the fluoride channel Fluc/FEX (TC 1.A.43) family.

The protein localises to the cell membrane. The enzyme catalyses fluoride(in) = fluoride(out). Na(+) is not transported, but it plays an essential structural role and its presence is essential for fluoride channel function. Fluoride-specific ion channel. Important for reducing fluoride concentration in the cell, thus reducing its toxicity. This is Fluoride-specific ion channel FluC 2 from Mycolicibacterium paratuberculosis (strain ATCC BAA-968 / K-10) (Mycobacterium paratuberculosis).